Here is a 1439-residue protein sequence, read N- to C-terminus: Mediator of RNA polymerase II transcription subunit 23 (1439 aa).

Positions Ser-282–Ala-318 form a coiled coil. The interaction with Hsf stretch occupies residues His-358–Gln-625. Disordered regions lie at residues Asn-1338–Gln-1372 and Ser-1401–Asn-1439. 2 stretches are compositionally biased toward low complexity: residues Ser-1348–Gln-1372 and Gln-1411–Asn-1439.

Belongs to the Mediator complex subunit 23 family. In terms of assembly, component of the Mediator complex. Interacts with Hsf.

Its subcellular location is the nucleus. Component of the Mediator complex, a coactivator involved in the regulated transcription of nearly all RNA polymerase II-dependent genes. Mediator functions as a bridge to convey information from gene-specific regulatory proteins to the basal RNA polymerase II transcription machinery. Mediator is recruited to promoters by direct interactions with regulatory proteins and serves as a scaffold for the assembly of a functional preinitiation complex with RNA polymerase II and the general transcription factors. Required for transcriptional activation in response to heat shock. The protein is Mediator of RNA polymerase II transcription subunit 23 (MED23) of Drosophila melanogaster (Fruit fly).